Consider the following 312-residue polypeptide: Glyoxylate/hydroxypyruvate reductase A (312 aa).

Arg-227 is a catalytic residue. His-275 acts as the Proton donor in catalysis.

The protein belongs to the D-isomer specific 2-hydroxyacid dehydrogenase family. GhrA subfamily.

It localises to the cytoplasm. The enzyme catalyses glycolate + NADP(+) = glyoxylate + NADPH + H(+). The catalysed reaction is (R)-glycerate + NAD(+) = 3-hydroxypyruvate + NADH + H(+). It catalyses the reaction (R)-glycerate + NADP(+) = 3-hydroxypyruvate + NADPH + H(+). Its function is as follows. Catalyzes the NADPH-dependent reduction of glyoxylate and hydroxypyruvate into glycolate and glycerate, respectively. This Escherichia coli (strain ATCC 8739 / DSM 1576 / NBRC 3972 / NCIMB 8545 / WDCM 00012 / Crooks) protein is Glyoxylate/hydroxypyruvate reductase A.